Consider the following 121-residue polypeptide: MIQMQTVLEVADNSGARKVMCIKVLGGSHRRYARVGDVIKVGVKDAIPRSKVKKGAVMRAVVVRTAQGVRRDDGSLIRFDDNAAVLLNNQNEPIGTRIFGPVTRELRERFMKIISLAAEVL.

It belongs to the universal ribosomal protein uL14 family. As to quaternary structure, part of the 50S ribosomal subunit. Forms a cluster with proteins L3 and L19. In the 70S ribosome, L14 and L19 interact and together make contacts with the 16S rRNA in bridges B5 and B8.

In terms of biological role, binds to 23S rRNA. Forms part of two intersubunit bridges in the 70S ribosome. The polypeptide is Large ribosomal subunit protein uL14 (Legionella pneumophila (strain Corby)).